The chain runs to 401 residues: tRNA-specific 2-thiouridylase MnmA (401 aa).

ATP is bound by residues Gly13 to Ser20 and Met39. The segment at Asn99–Asp101 is interaction with target base in tRNA. Cys104 (nucleophile) is an active-site residue. Cys104 and Cys202 are disulfide-bonded. An ATP-binding site is contributed by Gly128. The interaction with tRNA stretch occupies residues Lys152–Gln154. Cys202 acts as the Cysteine persulfide intermediate in catalysis. The tract at residues Arg329–Tyr330 is interaction with tRNA.

This sequence belongs to the MnmA/TRMU family.

The protein localises to the cytoplasm. The catalysed reaction is S-sulfanyl-L-cysteinyl-[protein] + uridine(34) in tRNA + AH2 + ATP = 2-thiouridine(34) in tRNA + L-cysteinyl-[protein] + A + AMP + diphosphate + H(+). Its function is as follows. Catalyzes the 2-thiolation of uridine at the wobble position (U34) of tRNA, leading to the formation of s(2)U34. This is tRNA-specific 2-thiouridylase MnmA from Polaromonas sp. (strain JS666 / ATCC BAA-500).